Reading from the N-terminus, the 87-residue chain is Exodeoxyribonuclease 7 small subunit (87 aa).

This sequence belongs to the XseB family. Heterooligomer composed of large and small subunits.

The protein resides in the cytoplasm. The enzyme catalyses Exonucleolytic cleavage in either 5'- to 3'- or 3'- to 5'-direction to yield nucleoside 5'-phosphates.. Its function is as follows. Bidirectionally degrades single-stranded DNA into large acid-insoluble oligonucleotides, which are then degraded further into small acid-soluble oligonucleotides. This is Exodeoxyribonuclease 7 small subunit from Solidesulfovibrio magneticus (strain ATCC 700980 / DSM 13731 / RS-1) (Desulfovibrio magneticus).